We begin with the raw amino-acid sequence, 530 residues long: Autoinducer-2 kinase (530 aa).

This sequence belongs to the FGGY kinase family.

Its subcellular location is the cytoplasm. It catalyses the reaction (S)-4,5-dihydroxypentane-2,3-dione + ATP = (2S)-2-hydroxy-3,4-dioxopentyl phosphate + ADP + H(+). Its function is as follows. Catalyzes the phosphorylation of autoinducer-2 (AI-2) to phospho-AI-2, which subsequently inactivates the transcriptional regulator LsrR and leads to the transcription of the lsr operon. Phosphorylates the ring-open form of (S)-4,5-dihydroxypentane-2,3-dione (DPD), which is the precursor to all AI-2 signaling molecules, at the C5 position. The protein is Autoinducer-2 kinase of Escherichia coli O139:H28 (strain E24377A / ETEC).